The chain runs to 162 residues: Putative ureidoglycolate lyase (162 aa).

Belongs to the ureidoglycolate lyase family. As to quaternary structure, homodimer. Ni(2+) is required as a cofactor.

The enzyme catalyses (S)-ureidoglycolate = urea + glyoxylate. The protein operates within nitrogen metabolism; (S)-allantoin degradation. In terms of biological role, catalyzes the catabolism of the allantoin degradation intermediate (S)-ureidoglycolate, generating urea and glyoxylate. Involved in the utilization of allantoin as nitrogen source. The polypeptide is Putative ureidoglycolate lyase (Agrobacterium fabrum (strain C58 / ATCC 33970) (Agrobacterium tumefaciens (strain C58))).